A 388-amino-acid chain; its full sequence is Succinate--CoA ligase [ADP-forming] subunit beta (388 aa).

One can recognise an ATP-grasp domain in the interval 9–244; that stretch reads KEIFRSMGVA…LEEEDPKEIE (236 aa). ATP is bound by residues K46, 53–55, E99, C102, and E107; that span reads GRG. Residues N199 and D213 each contribute to the Mg(2+) site. Substrate is bound by residues N264 and 321–323; that span reads GIM.

Belongs to the succinate/malate CoA ligase beta subunit family. As to quaternary structure, heterotetramer of two alpha and two beta subunits. It depends on Mg(2+) as a cofactor.

It catalyses the reaction succinate + ATP + CoA = succinyl-CoA + ADP + phosphate. The catalysed reaction is GTP + succinate + CoA = succinyl-CoA + GDP + phosphate. Its pathway is carbohydrate metabolism; tricarboxylic acid cycle; succinate from succinyl-CoA (ligase route): step 1/1. Functionally, succinyl-CoA synthetase functions in the citric acid cycle (TCA), coupling the hydrolysis of succinyl-CoA to the synthesis of either ATP or GTP and thus represents the only step of substrate-level phosphorylation in the TCA. The beta subunit provides nucleotide specificity of the enzyme and binds the substrate succinate, while the binding sites for coenzyme A and phosphate are found in the alpha subunit. The protein is Succinate--CoA ligase [ADP-forming] subunit beta of Staphylococcus epidermidis (strain ATCC 35984 / DSM 28319 / BCRC 17069 / CCUG 31568 / BM 3577 / RP62A).